Consider the following 310-residue polypeptide: UDP-N-acetylenolpyruvoylglucosamine reductase (310 aa).

An FAD-binding PCMH-type domain is found at 34–211 (TGGPAQCVYV…REDMGKIAQE (178 aa)). The active site involves Arg177. Ser225 serves as the catalytic Proton donor. The active site involves Glu295.

It belongs to the MurB family. FAD is required as a cofactor.

Its subcellular location is the cytoplasm. The catalysed reaction is UDP-N-acetyl-alpha-D-muramate + NADP(+) = UDP-N-acetyl-3-O-(1-carboxyvinyl)-alpha-D-glucosamine + NADPH + H(+). It participates in cell wall biogenesis; peptidoglycan biosynthesis. Its function is as follows. Cell wall formation. The chain is UDP-N-acetylenolpyruvoylglucosamine reductase from Beijerinckia indica subsp. indica (strain ATCC 9039 / DSM 1715 / NCIMB 8712).